A 222-amino-acid polypeptide reads, in one-letter code: Protein-L-isoaspartate O-methyltransferase (222 aa).

The active site involves serine 72.

Belongs to the methyltransferase superfamily. L-isoaspartyl/D-aspartyl protein methyltransferase family.

Its subcellular location is the cytoplasm. It carries out the reaction [protein]-L-isoaspartate + S-adenosyl-L-methionine = [protein]-L-isoaspartate alpha-methyl ester + S-adenosyl-L-homocysteine. In terms of biological role, catalyzes the methyl esterification of L-isoaspartyl residues in peptides and proteins that result from spontaneous decomposition of normal L-aspartyl and L-asparaginyl residues. It plays a role in the repair and/or degradation of damaged proteins. The protein is Protein-L-isoaspartate O-methyltransferase of Picosynechococcus sp. (strain ATCC 27264 / PCC 7002 / PR-6) (Agmenellum quadruplicatum).